Here is a 701-residue protein sequence, read N- to C-terminus: Elongation factor G (701 aa).

The 283-residue stretch at 8-290 (SRYRNIGISA…AVIEYLPAPT (283 aa)) folds into the tr-type G domain. Residues 17–24 (AHIDAGKT), 88–92 (DTPGH), and 142–145 (NKMD) each bind GTP.

The protein belongs to the TRAFAC class translation factor GTPase superfamily. Classic translation factor GTPase family. EF-G/EF-2 subfamily.

The protein localises to the cytoplasm. Its function is as follows. Catalyzes the GTP-dependent ribosomal translocation step during translation elongation. During this step, the ribosome changes from the pre-translocational (PRE) to the post-translocational (POST) state as the newly formed A-site-bound peptidyl-tRNA and P-site-bound deacylated tRNA move to the P and E sites, respectively. Catalyzes the coordinated movement of the two tRNA molecules, the mRNA and conformational changes in the ribosome. This Actinobacillus pleuropneumoniae serotype 5b (strain L20) protein is Elongation factor G.